The chain runs to 242 residues: MTEIFSTLFGQNDAQPPSGPAALGFAPGKPPPSMPPNQAPIAAQMPGQLGDDGPLLRKPGAMNEPFYLLRELPVGNDLTGNTNLITHYNLEHAYNKFCGKKVKEKLSNFLPELPGMIDCPGVQDGSSLRSLIEKPPVCGNSFSPLTGALLTGFRLHTGPLPEQYRLMHIQPPKKKSKHKHRHHHPQDPLPLETRTDPTKKKKKKDNEPERRKKKKDKKKKKNRHSPDHPGVTGSQPNSNSLR.

Positions 1 to 15 are enriched in polar residues; sequence MTEIFSTLFGQNDAQ. Disordered stretches follow at residues 1–33 and 171–242; these read MTEI…PPPS and PPKK…NSLR. Basic residues predominate over residues 171–184; the sequence is PPKKKSKHKHRHHH. Basic and acidic residues predominate over residues 193 to 210; the sequence is TRTDPTKKKKKKDNEPER. Residues 211-223 are compositionally biased toward basic residues; the sequence is RKKKKDKKKKKNR. A compositionally biased stretch (polar residues) spans 232-242; the sequence is TGSQPNSNSLR.

Belongs to the Mediator complex subunit 19 family. Component of the Mediator complex.

It is found in the nucleus. Component of the Mediator complex, a coactivator involved in the regulated transcription of nearly all RNA polymerase II-dependent genes. Mediator functions as a bridge to convey information from gene-specific regulatory proteins to the basal RNA polymerase II transcription machinery. Mediator is recruited to promoters by direct interactions with regulatory proteins and serves as a scaffold for the assembly of a functional preinitiation complex with RNA polymerase II and the general transcription factors. The chain is Mediator of RNA polymerase II transcription subunit 19-A (med19a) from Danio rerio (Zebrafish).